A 273-amino-acid polypeptide reads, in one-letter code: Phosphatidylglycerol--prolipoprotein diacylglyceryl transferase (273 aa).

Transmembrane regions (helical) follow at residues 21 to 41 (ISVRWYGLMYLVGFMFALWLA), 60 to 80 (LLFAGFLGVVLGGRIGYVLFY), 95 to 115 (VWTGGMSFHGGLLGVITAMLW), 124 to 144 (FFGVADMIAPLVPFGLGMGRM), 176 to 196 (SQLYEMALEGIVLFFILNWFI), 203 to 223 (GSVSGLFLAGYGTFRFLVEYV), and 236 to 256 (FISMGQILSLPMVIIGVLMMV). Residue Arg143 participates in a 1,2-diacyl-sn-glycero-3-phospho-(1'-sn-glycerol) binding.

It belongs to the Lgt family.

The protein resides in the cell inner membrane. It catalyses the reaction L-cysteinyl-[prolipoprotein] + a 1,2-diacyl-sn-glycero-3-phospho-(1'-sn-glycerol) = an S-1,2-diacyl-sn-glyceryl-L-cysteinyl-[prolipoprotein] + sn-glycerol 1-phosphate + H(+). The protein operates within protein modification; lipoprotein biosynthesis (diacylglyceryl transfer). In terms of biological role, catalyzes the transfer of the diacylglyceryl group from phosphatidylglycerol to the sulfhydryl group of the N-terminal cysteine of a prolipoprotein, the first step in the formation of mature lipoproteins. The protein is Phosphatidylglycerol--prolipoprotein diacylglyceryl transferase of Vibrio atlanticus (strain LGP32) (Vibrio splendidus (strain Mel32)).